The following is a 501-amino-acid chain: Maturase K (501 aa).

It belongs to the intron maturase 2 family. MatK subfamily.

It localises to the plastid. The protein resides in the chloroplast. Its function is as follows. Usually encoded in the trnK tRNA gene intron. Probably assists in splicing its own and other chloroplast group II introns. The polypeptide is Maturase K (Amborella trichopoda).